We begin with the raw amino-acid sequence, 220 residues long: Aspartic protease inhibitor 5 (220 aa).

A signal peptide spans 1–23 (MMKCLFLLCLCLLPIVVFSSTFT). Positions 24 to 32 (SQNLIDLPS) are excised as a propeptide. The short motif at 26-31 (NLIDLP) is the Vacuolar targeting signal element. A glycan (N-linked (GlcNAc...) asparagine) is linked at Asn51. 2 disulfides stabilise this stretch: Cys80–Cys125 and Cys174–Cys185.

The protein belongs to the protease inhibitor I3 (leguminous Kunitz-type inhibitor) family.

It localises to the vacuole. Its function is as follows. Inhibitor of cathepsin D (aspartic protease). May also inhibit trypsin and chymotrypsin (serine proteases). Protects the plant by inhibiting proteases of invading organisms. The chain is Aspartic protease inhibitor 5 from Solanum tuberosum (Potato).